Consider the following 259-residue polypeptide: Virion protein US10 homolog (259 aa).

A zinc finger spans residues 162–174 (CAHWCCLGHAFGC).

Belongs to the herpesviridae US10 family. Post-translationally, phosphorylated.

It is found in the virion tegument. It localises to the host nucleus matrix. This Equine herpesvirus 4 (strain 1942) (EHV-4) protein is Virion protein US10 homolog.